Reading from the N-terminus, the 198-residue chain is Nucleoid occlusion factor SlmA (198 aa).

The HTH tetR-type domain maps to N10–L70. A DNA-binding region (H-T-H motif) is located at residues T33–F52. Residues E117–M145 are a coiled coil.

It belongs to the nucleoid occlusion factor SlmA family. As to quaternary structure, homodimer. Interacts with FtsZ.

The protein localises to the cytoplasm. It is found in the nucleoid. Functionally, required for nucleoid occlusion (NO) phenomenon, which prevents Z-ring formation and cell division over the nucleoid. Acts as a DNA-associated cell division inhibitor that binds simultaneously chromosomal DNA and FtsZ, and disrupts the assembly of FtsZ polymers. SlmA-DNA-binding sequences (SBS) are dispersed on non-Ter regions of the chromosome, preventing FtsZ polymerization at these regions. The sequence is that of Nucleoid occlusion factor SlmA from Enterobacter sp. (strain 638).